The following is a 429-amino-acid chain: Fc receptor-like protein 1 (429 aa).

Residues methionine 1–proline 16 form the signal peptide. Ig-like C2-type domains lie at alanine 17–asparagine 104, proline 109–threonine 200, and proline 208–threonine 291. Topologically, residues alanine 17–serine 307 are extracellular. 3 disulfide bridges follow: cysteine 38–cysteine 86, cysteine 134–cysteine 183, and cysteine 229–cysteine 276. A glycan (N-linked (GlcNAc...) asparagine) is linked at asparagine 293. Residues glycine 308–tyrosine 328 form a helical membrane-spanning segment. Over glycine 329–methionine 429 the chain is Cytoplasmic. 5 consecutive short sequence motifs (ITIM motif) follow at residues phenylalanine 354 to serine 359, proline 367 to valine 372, glutamate 379 to alanine 384, aspartate 410 to leucine 415, and valine 423 to alanine 428.

In terms of assembly, interacts with ABL1. Interacts with GRB2 and SOS1. Interacts with SHIP-1/INPP5D. Phosphorylated on tyrosines upon activation. In terms of tissue distribution, primarily expressed in secondary lymphoid tissues by mature subsets of B-cells. Detected in spleen, lymph node, heart, skeletal muscle, kidney, liver and placenta. Specifically expressed by mature B lineage cells with higher expression in naive versus memory B-cells (at protein level).

It is found in the cell membrane. Functionally, type I transmembrane surface glycoprotein preferentially expressed by B-cells that regulates BCR-mediated signaling responses. Recruits ABL1 as the intracellular effector molecule to enhance B-cell activation. Also plays a negative role by suppressing ERK activation under homeostatic and BCR-stimulated conditions in a GRB2-dependent manner. This chain is Fc receptor-like protein 1 (FCRL1), found in Homo sapiens (Human).